Consider the following 311-residue polypeptide: Malate dehydrogenase (311 aa).

NAD(+) is bound by residues 7–13 (GAAGGIG) and Asp34. Arg81 and Arg87 together coordinate substrate. NAD(+)-binding positions include Asn94 and 117–119 (ITN). The substrate site is built by Asn119 and Arg153. The active-site Proton acceptor is the His177. Residue Met227 coordinates NAD(+).

Belongs to the LDH/MDH superfamily. MDH type 1 family. In terms of assembly, homodimer.

It catalyses the reaction (S)-malate + NAD(+) = oxaloacetate + NADH + H(+). In terms of biological role, catalyzes the reversible oxidation of malate to oxaloacetate. The chain is Malate dehydrogenase from Aeromonas hydrophila subsp. hydrophila (strain ATCC 7966 / DSM 30187 / BCRC 13018 / CCUG 14551 / JCM 1027 / KCTC 2358 / NCIMB 9240 / NCTC 8049).